We begin with the raw amino-acid sequence, 421 residues long: ATP-dependent RNA helicase RhlB (421 aa).

Residues 9 to 37 carry the Q motif motif; that stretch reads QKFSDFALHPKVVEALEKKGFHNCTPIQA. In terms of domain architecture, Helicase ATP-binding spans 40–219; sequence LPLTLAGRDV…FEQMNNAEYI (180 aa). 53-60 lines the ATP pocket; that stretch reads AQTGTGKT. Residues 165 to 168 carry the DEAD box motif; that stretch reads DEAD. The Helicase C-terminal domain maps to 245 to 390; the sequence is RLLQTLIEEE…VSKYNPDALM (146 aa). The segment at 392–421 is disordered; sequence DLPKPLRLTRPRTGNGPRRTGAPRNRRRSG. Over residues 402–414 the composition is skewed to low complexity; the sequence is PRTGNGPRRTGAP.

It belongs to the DEAD box helicase family. RhlB subfamily. In terms of assembly, component of the RNA degradosome, which is a multiprotein complex involved in RNA processing and mRNA degradation.

It localises to the cytoplasm. It carries out the reaction ATP + H2O = ADP + phosphate + H(+). Its function is as follows. DEAD-box RNA helicase involved in RNA degradation. Has RNA-dependent ATPase activity and unwinds double-stranded RNA. The sequence is that of ATP-dependent RNA helicase RhlB from Escherichia fergusonii (strain ATCC 35469 / DSM 13698 / CCUG 18766 / IAM 14443 / JCM 21226 / LMG 7866 / NBRC 102419 / NCTC 12128 / CDC 0568-73).